A 303-amino-acid polypeptide reads, in one-letter code: Cytosolic Fe-S cluster assembly factor CFD1 (303 aa).

Residue 15-22 (GKGGVGKS) participates in ATP binding. Residues C199 and C202 each contribute to the [4Fe-4S] cluster site.

It belongs to the Mrp/NBP35 ATP-binding proteins family. NUBP2/CFD1 subfamily. Heterotetramer of 2 NBP35 and 2 CFD1 chains. Requires [4Fe-4S] cluster as cofactor.

The protein resides in the cytoplasm. In terms of biological role, component of the cytosolic iron-sulfur (Fe/S) protein assembly (CIA) machinery. Required for maturation of extramitochondrial Fe-S proteins. The NBP35-CFD1 heterotetramer forms a Fe-S scaffold complex, mediating the de novo assembly of an Fe-S cluster and its transfer to target apoproteins. The protein is Cytosolic Fe-S cluster assembly factor CFD1 of Chaetomium globosum (strain ATCC 6205 / CBS 148.51 / DSM 1962 / NBRC 6347 / NRRL 1970) (Soil fungus).